We begin with the raw amino-acid sequence, 276 residues long: Rhomboid protease GlpG (276 aa).

6 consecutive transmembrane segments (helical) span residues 94 to 114, 142 to 162, 168 to 188, 193 to 213, 229 to 249, and 250 to 270; these read AGPL…LMQI, ALLH…WYLG, VLGT…SGWA, SGTY…YVWL, LMAF…GMSI, and ANAA…WDTY. Catalysis depends on serine 201, which acts as the Nucleophile. Histidine 254 is an active-site residue.

Belongs to the peptidase S54 family.

It localises to the cell inner membrane. It catalyses the reaction Cleaves type-1 transmembrane domains using a catalytic dyad composed of serine and histidine that are contributed by different transmembrane domains.. In terms of biological role, rhomboid-type serine protease that catalyzes intramembrane proteolysis. This chain is Rhomboid protease GlpG, found in Pectobacterium atrosepticum (strain SCRI 1043 / ATCC BAA-672) (Erwinia carotovora subsp. atroseptica).